We begin with the raw amino-acid sequence, 37 residues long: Large ribosomal subunit protein bL36c (37 aa).

Belongs to the bacterial ribosomal protein bL36 family.

It is found in the plastid. The protein localises to the chloroplast. In Lactuca sativa (Garden lettuce), this protein is Large ribosomal subunit protein bL36c.